Here is a 153-residue protein sequence, read N- to C-terminus: Lectin-like protein EP153R (153 aa).

Residues 1-30 (MYFKKKYIGLIDKNCEKKILDDSSTIKICY) lie on the Cytoplasmic side of the membrane. The helical transmembrane segment at 31-51 (ILIGILIGTNMITLIYNFIFW) threads the bilayer. The Extracellular segment spans residues 52–153 (DNYIKCYRNN…YTDLLFICGK (102 aa)). A disulfide bridge connects residues Cys-67 and Cys-78. N-linked (GlcNAc...) asparagine; by host glycans are attached at residues Asn-83, Asn-89, Asn-101, Asn-107, Asn-113, Asn-120, Asn-127, and Asn-143. Cys-97 and Cys-151 are oxidised to a cystine.

This sequence belongs to the asfivirus lectin-like protein family. Homodimer.

The protein localises to the host endoplasmic reticulum membrane. Its function is as follows. Down-regulates MHC-I expression by impairing the appropriate configuration or presentation into the plasma membrane of the latter. Participates in viral hemadsorption, which may help viral spread. Reduces the transactivating activity of host TP53, thus inhibiting apoptosis. Non-essential for virus growth in swine macrophage cell cultures. The protein is Lectin-like protein EP153R of African swine fever virus (strain Badajoz 1971 Vero-adapted) (Ba71V).